The following is a 419-amino-acid chain: Dynein regulatory complex protein 9 (419 aa).

Disordered stretches follow at residues Thr-25–Ser-45 and Asn-394–Lys-419. Over residues Glu-30–Ser-45 the composition is skewed to acidic residues. The region spanning Glu-372 to Asp-401 is the IQ domain. Basic and acidic residues predominate over residues Asn-394–Lys-413.

This sequence belongs to the DRC9 family. In terms of assembly, component of the nexin-dynein regulatory complex (N-DRC). Interacts (via IQ domain) with CALM when calcium levels are low. Does not interact with CALM in the presence of Ca(2+). Interacts with the HSP70 proteins HSPA1L and HSPA8. May form a complex with CAMK4 and HSP70. In terms of tissue distribution, expressed in the testes (at protein level). Also detected in oviduct (at protein level). Also detected in the trachea.

The protein localises to the cytoplasm. The protein resides in the cell projection. Its subcellular location is the cilium. It is found in the flagellum. It localises to the cytoskeleton. The protein localises to the flagellum axoneme. In terms of biological role, component of the nexin-dynein regulatory complex (N-DRC), a key regulator of ciliary/flagellar motility which maintains the alignment and integrity of the distal axoneme and regulates microtubule sliding in motile axonemes. Binds calmodulin when cellular Ca(2+) levels are low and thereby contributes to the regulation of calcium and calmodulin-dependent protein kinase IV (CAMK4) activity; contributes to the regulation of CAMK4 signaling cascades. Required for normal axoneme assembly in sperm flagella, normal sperm tail formation and for male fertility. The chain is Dynein regulatory complex protein 9 (Iqcg) from Mus musculus (Mouse).